A 429-amino-acid chain; its full sequence is Cholesterol 7-desaturase nvd (429 aa).

A helical transmembrane segment spans residues 23–43; that stretch reads FVICLWTLAVTFIRIYWIFFV. The Rieske domain maps to 98–201; sequence YGILKSSQLK…SQEVDGFIFI (104 aa). [2Fe-2S] cluster-binding residues include Cys138, His140, Cys158, and His161.

The protein belongs to the cholesterol 7-desaturase family. [2Fe-2S] cluster serves as cofactor. Expressed predominantly in the prothoracic gland and weakly in brain and malpighian tubules.

It is found in the membrane. It carries out the reaction cholesterol + NADPH + O2 + H(+) = 7-dehydrocholesterol + NADP(+) + 2 H2O. The enzyme catalyses cholesterol + NADH + O2 + H(+) = 7-dehydrocholesterol + NAD(+) + 2 H2O. It functions in the pathway steroid hormone biosynthesis; dafachronic acid biosynthesis. Its function is as follows. Catalyzes the production of 7-dehydrocholesterol (7-DHC or cholesta-5,7-dien-3beta-ol) by inserting a double bond (desaturating) at the C7-C8 single bond of cholesterol. Essential regulator of steroid biosynthesis, as this reaction is the first step in the synthesis of the steroid hormone Delta(7)-dafachronic acid. Required for insect molting, metamorphosis and body growth throughout development via the regulation of ecdysteroid biosynthesis in the prothoracic gland. This is Cholesterol 7-desaturase nvd from Drosophila melanogaster (Fruit fly).